The sequence spans 339 residues: Serpentine receptor class alpha-22 (339 aa).

6 helical membrane-spanning segments follow: residues 33–53 (IFISTIVLISYCFILLAIQAL), 110–130 (VVDLYFFFLTGYFSTYSVFSL), 150–170 (FIAISLLVIQLLLTLVSFYIA), 199–219 (VRTMVMVCCLIVTGFTYYLSV), 250–270 (IFIILQLSCVMLTSIGMNLLL), and 284–304 (IALFLPGITYANLCLPLVIYF).

Belongs to the nematode receptor-like protein sra family.

It is found in the membrane. This Caenorhabditis elegans protein is Serpentine receptor class alpha-22 (sra-22).